A 312-amino-acid polypeptide reads, in one-letter code: Ribosomal RNA small subunit methyltransferase H (312 aa).

Residues Ala32–His34, Asp52, Phe79, Asp100, and Gln107 each bind S-adenosyl-L-methionine.

It belongs to the methyltransferase superfamily. RsmH family.

Its subcellular location is the cytoplasm. It catalyses the reaction cytidine(1402) in 16S rRNA + S-adenosyl-L-methionine = N(4)-methylcytidine(1402) in 16S rRNA + S-adenosyl-L-homocysteine + H(+). In terms of biological role, specifically methylates the N4 position of cytidine in position 1402 (C1402) of 16S rRNA. The polypeptide is Ribosomal RNA small subunit methyltransferase H (Listeria monocytogenes serotype 4b (strain CLIP80459)).